The chain runs to 156 residues: Rhombotin-1 (156 aa).

2 LIM zinc-binding domains span residues 24-83 (CAGC…RLFG) and 88-147 (CAAC…EGQL).

Expressed mainly in the central nervous. Low level of expression in other tissues including thymus.

It is found in the nucleus. Its function is as follows. May be involved in gene regulation within neural lineage cells potentially by direct DNA binding or by binding to other transcription factors. The polypeptide is Rhombotin-1 (LMO1) (Homo sapiens (Human)).